The sequence spans 265 residues: MTPLRILISNDDGVFADGIRTLAAAAAAAGHQVTVVCPDQERSATGHGLTLQTPIRAERADELFEPGIKAWACSGTPADCMKLALFELLPEKPDLVLSGINHGPNLGTDVFCSGTVAAAMEGTLEGLPAMAVSSACFQWREFQAAAHLAIQVAEAALADQWPENLLLNLNVPPCKQEAMGKLSWTRLSIRRYDEQFSPRVDPRGRTYYWLAGEAVEDFESGGDGPRDWPTDVAQIQADAPSLTPIQPELFWRGGLSSLPQLNIDQ.

A divalent metal cation is bound by residues aspartate 11, aspartate 12, serine 43, and asparagine 101.

This sequence belongs to the SurE nucleotidase family. It depends on a divalent metal cation as a cofactor.

It localises to the cytoplasm. It catalyses the reaction a ribonucleoside 5'-phosphate + H2O = a ribonucleoside + phosphate. In terms of biological role, nucleotidase that shows phosphatase activity on nucleoside 5'-monophosphates. The polypeptide is 5'-nucleotidase SurE (Synechococcus sp. (strain CC9311)).